A 592-amino-acid chain; its full sequence is Frizzled-9 (592 aa).

The N-terminal stretch at 1 to 23 (MAVPPLLRGALLLWQLLATGGAA) is a signal peptide. At 24–230 (LEIGRFDPER…EVFWSRRDKD (207 aa)) the chain is on the extracellular side. The FZ domain occupies 35–156 (RGPAPCQAME…NDPHALCMEA (122 aa)). 5 disulfides stabilise this stretch: Cys40-Cys101, Cys48-Cys94, Cys85-Cys123, Cys112-Cys153, and Cys116-Cys140. Asn54 carries N-linked (GlcNAc...) asparagine glycosylation. A required for Wnt-activated receptor activity region spans residues 59-173 (PNLLGHTSQG…PTEPHKGLGM (115 aa)). Asn159 carries an N-linked (GlcNAc...) asparagine glycan. A helical transmembrane segment spans residues 231-251 (FALVWMAVWSALCFFSTAFTV). Topologically, residues 252-267 (FTFLLEPHRFQYPERP) are cytoplasmic. The chain crosses the membrane as a helical span at residues 268 to 288 (IIFLSMCYNVYSLAFLIRAVA). The Extracellular portion of the chain corresponds to 289 to 316 (GAQSVACDQEAGALYVIQEGLENTGCTL). A helical transmembrane segment spans residues 317 to 337 (VFLLLYYFGMASSLWWVVLTL). The Cytoplasmic segment spans residues 338-356 (TWFLAAGKKWGHEAIEAHG). A helical membrane pass occupies residues 357–377 (SYFHMAAWGLPALKTIVVLTL). Topologically, residues 378–401 (RKVAGDELTGLCYVASMDPAALTG) are extracellular. Residues 402–422 (FVLVPLSCYLVLGTSFLLTGF) traverse the membrane as a helical segment. Residues 423-448 (VALFHIRKIMKTGGTNTEKLEKLMVK) are Cytoplasmic-facing. A helical membrane pass occupies residues 449–469 (IGVFSILYTVPATCVIVCYVY). The Extracellular segment spans residues 470–509 (ERLNMDFWRLRATEQPCTAATVPGGRRDCSLPGGSVPTVA). A helical membrane pass occupies residues 510–530 (VFMLKIFMSLVVGITSGVWVW). Residues 531–592 (SSKTFQTWQS…DPSLENPTHL (62 aa)) are Cytoplasmic-facing. The short motif at 533 to 538 (KTFQTW) is the Lys-Thr-X-X-X-Trp motif, mediates interaction with the PDZ domain of Dvl family members element. Residues 555–592 (ACRTPGGYGRGTHCHYKAPTVVLHMTKTDPSLENPTHL) form a required for CTNNB1 accumulation and TCF transcription factor activity region.

The protein belongs to the G-protein coupled receptor Fz/Smo family. Ubiquitinated by ZNRF3, leading to its degradation by the proteasome. In the embryo, found in the neural tube, trunk skeletal muscle precursors (myotomes), limb skeletal anlagen, craniofacial regions and nephric ducts. In the adult, expression is abundant in heart, brain, testis and skeletal muscle. In the testis, expressed in all spermatogenic cell types. Lower levels in adult lung, liver and kidney. Barely detectable in spleen. Expressed also in chondrocytes.

Its subcellular location is the cell membrane. Receptor for WNT2 that is coupled to the beta-catenin canonical signaling pathway, which leads to the activation of disheveled proteins, inhibition of GSK-3 kinase, nuclear accumulation of beta-catenin and activation of Wnt target genes. Plays a role in neuromuscular junction (NMJ) assembly by negatively regulating the clustering of acetylcholine receptors (AChR) through the beta-catenin canonical signaling pathway. May play a role in neural progenitor cells (NPCs) viability through the beta-catenin canonical signaling pathway by negatively regulating cell cycle arrest leading to inhibition of neuron apoptotic process. During hippocampal development, regulates neuroblast proliferation and apoptotic cell death. Controls bone formation through non canonical Wnt signaling mediated via ISG15. Positively regulates bone regeneration through non canonical Wnt signaling. This Mus musculus (Mouse) protein is Frizzled-9 (Fzd9).